We begin with the raw amino-acid sequence, 201 residues long: FMN reductase (NADH) RutF (201 aa).

Positions 169–201 (APRSGAAPAEPARAARALGARPAEGPALALRSA) are disordered.

Belongs to the non-flavoprotein flavin reductase family. RutF subfamily.

The enzyme catalyses FMNH2 + NAD(+) = FMN + NADH + 2 H(+). Catalyzes the reduction of FMN to FMNH2 which is used to reduce pyrimidine by RutA via the Rut pathway. This Methylorubrum extorquens (strain ATCC 14718 / DSM 1338 / JCM 2805 / NCIMB 9133 / AM1) (Methylobacterium extorquens) protein is FMN reductase (NADH) RutF.